The sequence spans 247 residues: C-type lectin domain family 7 member A (247 aa).

The Cytoplasmic portion of the chain corresponds to 1-44 (MEYHPDLENLDEDGYTQLHFDSQSNTRIAVVSEKGSCAASPPWR). The ITAM-like motif lies at 15–18 (YTQL). Residues 45-65 (LIAVILGILCLVILVIAVVLG) traverse the membrane as a helical; Signal-anchor for type II membrane protein segment. Over 66 to 247 (TMAIWRSNSG…YSICEKKFSM (182 aa)) the chain is Extracellular. Asn91 is a glycosylation site (N-linked (GlcNAc...) asparagine). 3 disulfides stabilise this stretch: Cys120–Cys131, Cys148–Cys241, and Cys220–Cys233. Residues 127 to 242 (YEKSCYLFSM…CSVPSYSICE (116 aa)) enclose the C-type lectin domain. 146-153 (RQCWQLGS) provides a ligand contact to (1,3-beta-D-glucosyl)n. Residues Lys157, Asp159, and Glu163 each coordinate a divalent metal cation. Glu195 is a binding site for (1,3-beta-D-glucosyl)n. Glu242 is an a divalent metal cation binding site.

Homodimer. Interacts with SYK; participates in leukocyte activation in presence of fungal pathogens. Interacts with CD37; this interaction controls CLEC7A-mediated IL-6 production. In terms of assembly, interacts with RANBP9. Phosphorylated on tyrosine residues in response to beta-glucan binding. Highly expressed in peripheral blood leukocytes and dendritic cells. Detected in spleen, bone marrow, lung, muscle, stomach and placenta.

It localises to the cell membrane. Its subcellular location is the cytoplasm. In terms of biological role, lectin that functions as a pattern recognizing receptor (PRR) specific for beta-1,3-linked and beta-1,6-linked glucans, which constitute cell wall constituents from pathogenic bacteria and fungi. Necessary for the TLR2-mediated inflammatory response and activation of NF-kappa-B: upon beta-glucan binding, recruits SYK via its ITAM motif and promotes a signaling cascade that activates some CARD domain-BCL10-MALT1 (CBM) signalosomes, leading to the activation of NF-kappa-B and MAP kinase p38 (MAPK11, MAPK12, MAPK13 and/or MAPK14) pathways which stimulate expression of genes encoding pro-inflammatory cytokines and chemokines. Enhances cytokine production in macrophages and dendritic cells. Mediates production of reactive oxygen species in the cell. Mediates phagocytosis of C.albicans conidia. Binds T-cells in a way that does not involve their surface glycans and plays a role in T-cell activation. Stimulates T-cell proliferation. Induces phosphorylation of SCIMP after binding beta-glucans. The protein is C-type lectin domain family 7 member A of Homo sapiens (Human).